The chain runs to 2185 residues: Genome polyprotein (2185 aa).

Gly2 carries N-myristoyl glycine; by host lipidation. Residues Gly2–Gln1495 are Cytoplasmic-facing. The tract at residues Phe566–Val582 is amphipathic alpha-helix. Catalysis depends on for protease 2A activity residues His872 and Asp890. Positions 907 and 909 each coordinate Zn(2+). Cys961 (for protease 2A activity) is an active-site residue. Positions 967 and 969 each coordinate Zn(2+). The interval Asn1101–Gln1173 is membrane-binding. Residues Asn1101–Thr1239 are oligomerization. Positions Ala1122–Gln1126 are RNA-binding. The 157-residue stretch at Glu1205–Asn1361 folds into the SF3 helicase domain. Zn(2+)-binding residues include Cys1369, Cys1381, and Cys1386. The segment at Cys1369–Cys1386 adopts a C4-type; degenerate zinc-finger fold. Residues Glu1413 to Val1420 form an RNA-binding region. The segment at Leu1424–Gln1429 is oligomerization. Residues Ala1496–Tyr1511 lie within the membrane without spanning it. At Lys1512 to Phe2185 the chain is on the cytoplasmic side. Tyr1521 carries the O-(5'-phospho-RNA)-tyrosine modification. The 179-residue stretch at Gly1541–Phe1719 folds into the Peptidase C3 domain. Residues His1580, Glu1611, and Cys1687 each act as for protease 3C activity in the active site. The 117-residue stretch at Gly1950–Leu2066 folds into the RdRp catalytic domain. 2 residues coordinate Mg(2+): Asp1956 and Asp2052.

This sequence belongs to the picornaviruses polyprotein family. As to quaternary structure, interacts with capsid protein VP1 and capsid protein VP3 to form heterotrimeric protomers. Interacts with capsid protein VP0, and capsid protein VP3 to form heterotrimeric protomers. Five protomers subsequently associate to form pentamers which serve as building blocks for the capsid. Interacts with capsid protein VP2, capsid protein VP3 and capsid protein VP4 following cleavage of capsid protein VP0. In terms of assembly, interacts with capsid protein VP1 and capsid protein VP3 in the mature capsid. As to quaternary structure, interacts with capsid protein VP0 and capsid protein VP1 to form heterotrimeric protomers. Five protomers subsequently associate to form pentamers which serve as building blocks for the capsid. Interacts with capsid protein VP4 in the mature capsid. Interacts with protein 2C; this interaction may be important for virion morphogenesis. Interacts with capsid protein VP1 and capsid protein VP3. In terms of assembly, homodimer. As to quaternary structure, homohexamer; forms a hexameric ring structure with 6-fold symmetry characteristic of AAA+ ATPases. Interacts (via N-terminus) with host RTN3 (via reticulon domain); this interaction is important for viral replication. Interacts with capsid protein VP3; this interaction may be important for virion morphogenesis. Interacts with protein 3CD. In terms of assembly, homodimer. Interacts with host GBF1. Interacts (via GOLD domain) with host ACBD3 (via GOLD domain); this interaction allows the formation of a viral protein 3A/ACBD3 heterotetramer with a 2:2 stoichiometry, which will stimulate the recruitment of host PI4KB in order to synthesize PI4P at the viral RNA replication sites. As to quaternary structure, interacts with RNA-directed RNA polymerase. Interacts with protein 3AB and with RNA-directed RNA polymerase. In terms of assembly, interacts with Viral protein genome-linked and with protein 3CD. It depends on Mg(2+) as a cofactor. In terms of processing, specific enzymatic cleavages in vivo by the viral proteases yield processing intermediates and the mature proteins. Post-translationally, myristoylation is required for the formation of pentamers during virus assembly. Further assembly of 12 pentamers and a molecule of genomic RNA generates the provirion. During virion maturation, immature virions are rendered infectious following cleavage of VP0 into VP4 and VP2. This maturation seems to be an autocatalytic event triggered by the presence of RNA in the capsid and it is followed by a conformational change infectious virion. In terms of processing, myristoylation is required during RNA encapsidation and formation of the mature virus particle. Post-translationally, VPg is uridylylated by the polymerase into VPg-pUpU. This acts as a nucleotide-peptide primer for the genomic RNA replication.

The protein localises to the virion. It localises to the host cytoplasm. Its subcellular location is the host cytoplasmic vesicle membrane. The protein resides in the host nucleus. The catalysed reaction is a ribonucleoside 5'-triphosphate + H2O = a ribonucleoside 5'-diphosphate + phosphate + H(+). It catalyses the reaction Selective cleavage of Tyr-|-Gly bond in the picornavirus polyprotein.. It carries out the reaction RNA(n) + a ribonucleoside 5'-triphosphate = RNA(n+1) + diphosphate. The enzyme catalyses Selective cleavage of Gln-|-Gly bond in the poliovirus polyprotein. In other picornavirus reactions Glu may be substituted for Gln, and Ser or Thr for Gly.. Its activity is regulated as follows. Replication or transcription is subject to high level of random mutations by the nucleotide analog ribavirin. Its function is as follows. Forms an icosahedral capsid of pseudo T=3 symmetry with capsid proteins VP2 and VP3. The capsid is 300 Angstroms in diameter, composed of 60 copies of each capsid protein and enclosing the viral positive strand RNA genome. Capsid protein VP1 mainly forms the vertices of the capsid. Capsid protein VP1 interacts with host cell receptor to provide virion attachment to target host cells. This attachment induces virion internalization. Tyrosine kinases are probably involved in the entry process. After binding to its receptor, the capsid undergoes conformational changes. Capsid protein VP1 N-terminus (that contains an amphipathic alpha-helix) and capsid protein VP4 are externalized. Together, they shape a pore in the host membrane through which viral genome is translocated to host cell cytoplasm. Functionally, forms an icosahedral capsid of pseudo T=3 symmetry with capsid proteins VP2 and VP3. The capsid is 300 Angstroms in diameter, composed of 60 copies of each capsid protein and enclosing the viral positive strand RNA genome. In terms of biological role, lies on the inner surface of the capsid shell. After binding to the host receptor, the capsid undergoes conformational changes. Capsid protein VP4 is released, Capsid protein VP1 N-terminus is externalized, and together, they shape a pore in the host membrane through which the viral genome is translocated into the host cell cytoplasm. Component of immature procapsids, which is cleaved into capsid proteins VP4 and VP2 after maturation. Allows the capsid to remain inactive before the maturation step. Its function is as follows. Cysteine protease that cleaves viral polyprotein and specific host proteins. It is responsible for the autocatalytic cleavage between the P1 and P2 regions, which is the first cleavage occurring in the polyprotein. Also cleaves the host translation initiation factor EIF4G1, in order to shut down the capped cellular mRNA translation. Inhibits the host nucleus-cytoplasm protein and RNA trafficking by cleaving host members of the nuclear pores. Counteracts stress granule formation probably by antagonizing its assembly or promoting its dissassembly. Cleaves and inhibits host IFIH1/MDA5, thereby inhibiting the type-I IFN production and the establishment of the antiviral state. Cleaves and inhibits host MAVS, thereby inhibiting the type-I IFN production and the establishment of the antiviral state. Functionally, plays an essential role in the virus replication cycle by acting as a viroporin. Creates a pore in the host endoplasmic reticulum and as a consequence releases Ca2+ in the cytoplasm of infected cell. In turn, high levels of cytoplasmic calcium may trigger membrane trafficking and transport of viral ER-associated proteins to viroplasms, sites of viral genome replication. In terms of biological role, induces and associates with structural rearrangements of intracellular membranes. Displays RNA-binding, nucleotide binding and NTPase activities. May play a role in virion morphogenesis and viral RNA encapsidation by interacting with the capsid protein VP3. Localizes the viral replication complex to the surface of membranous vesicles. Together with protein 3CD binds the Cis-Active RNA Element (CRE) which is involved in RNA synthesis initiation. Acts as a cofactor to stimulate the activity of 3D polymerase, maybe through a nucleid acid chaperone activity. Its function is as follows. Localizes the viral replication complex to the surface of membranous vesicles. It inhibits host cell endoplasmic reticulum-to-Golgi apparatus transport and causes the disassembly of the Golgi complex, possibly through GBF1 interaction. This would result in depletion of MHC, trail receptors and IFN receptors at the host cell surface. Plays an essential role in viral RNA replication by recruiting ACBD3 and PI4KB at the viral replication sites, thereby allowing the formation of the rearranged membranous structures where viral replication takes place. Functionally, acts as a primer for viral RNA replication and remains covalently bound to viral genomic RNA. VPg is uridylylated prior to priming replication into VPg-pUpU. The oriI viral genomic sequence may act as a template for this. The VPg-pUpU is then used as primer on the genomic RNA poly(A) by the RNA-dependent RNA polymerase to replicate the viral genome. During genome replication, the VPg-RNA linkage is removed by the host TDP2, thereby accelerating replication. During the late stage of the replication cycle, host TDP2 is excluded from sites of viral RNA synthesis and encapsidation, allowing for the generation of progeny virions. In terms of biological role, involved in the viral replication complex and viral polypeptide maturation. It exhibits protease activity with a specificity and catalytic efficiency that is different from protease 3C. Protein 3CD lacks polymerase activity. Protein 3CD binds to the 5'UTR of the viral genome. Replicates the viral genomic RNA on the surface of intracellular membranes. May form linear arrays of subunits that propagate along a strong head-to-tail interaction called interface-I. Covalently attaches UMP to a tyrosine of VPg, which is used to prime RNA synthesis. The positive stranded RNA genome is first replicated at virus induced membranous vesicles, creating a dsRNA genomic replication form. This dsRNA is then used as template to synthesize positive stranded RNA genomes. ss(+)RNA genomes are either translated, replicated or encapsidated. Its function is as follows. Major viral protease that mediates proteolytic processing of the polyprotein. Cleaves host EIF5B, contributing to host translation shutoff. Also cleaves host PABPC1, contributing to host translation shutoff. Cleaves host NLRP1, triggers host N-glycine-mediated degradation of the autoinhibitory NLRP1 N-terminal fragment. The polypeptide is Genome polyprotein (Homo sapiens (Human)).